Reading from the N-terminus, the 273-residue chain is Mitochondrial distribution and morphology protein 12 (273 aa).

Positions Met1 to Glu273 constitute an SMP-LTD domain. Residues Leu124–Arg145 are disordered.

This sequence belongs to the MDM12 family. As to quaternary structure, component of the ER-mitochondria encounter structure (ERMES) or MDM complex, composed of mmm1, mdm10, mdm12 and mdm34. A mmm1 homodimer associates with one molecule of mdm12 on each side in a pairwise head-to-tail manner, and the SMP-LTD domains of mmm1 and mdm12 generate a continuous hydrophobic tunnel for phospholipid trafficking.

It is found in the mitochondrion outer membrane. Its subcellular location is the endoplasmic reticulum membrane. Functionally, component of the ERMES/MDM complex, which serves as a molecular tether to connect the endoplasmic reticulum (ER) and mitochondria. Components of this complex are involved in the control of mitochondrial shape and protein biogenesis, and function in nonvesicular lipid trafficking between the ER and mitochondria. Mdm12 is required for the interaction of the ER-resident membrane protein mmm1 and the outer mitochondrial membrane-resident beta-barrel protein mdm10. The mdm12-mmm1 subcomplex functions in the major beta-barrel assembly pathway that is responsible for biogenesis of all mitochondrial outer membrane beta-barrel proteins, and acts in a late step after the SAM complex. The mdm10-mdm12-mmm1 subcomplex further acts in the TOM40-specific pathway after the action of the mdm12-mmm1 complex. Essential for establishing and maintaining the structure of mitochondria and maintenance of mtDNA nucleoids. The sequence is that of Mitochondrial distribution and morphology protein 12 from Schizosaccharomyces pombe (strain 972 / ATCC 24843) (Fission yeast).